A 79-amino-acid chain; its full sequence is MKEQIFDIIETISGTDEFREDLDMDLFEEGILDSMRAIMLIVELEGAFDISLPPSEMDREDWNTANKIAARVQEKTDEN.

Residues 1–76 enclose the Carrier domain; it reads MKEQIFDIIE…KIAARVQEKT (76 aa). The residue at position 34 (serine 34) is an O-(pantetheine 4'-phosphoryl)serine.

Belongs to the DltC family. 4'-phosphopantetheine is transferred from CoA to a specific serine of apo-DCP.

Its subcellular location is the cytoplasm. It functions in the pathway cell wall biogenesis; lipoteichoic acid biosynthesis. In terms of biological role, carrier protein involved in the D-alanylation of lipoteichoic acid (LTA). The loading of thioester-linked D-alanine onto DltC is catalyzed by D-alanine--D-alanyl carrier protein ligase DltA. The DltC-carried D-alanyl group is further transferred to cell membrane phosphatidylglycerol (PG) by forming an ester bond, probably catalyzed by DltD. D-alanylation of LTA plays an important role in modulating the properties of the cell wall in Gram-positive bacteria, influencing the net charge of the cell wall. The polypeptide is D-alanyl carrier protein (Lactococcus lactis subsp. cremoris (strain SK11)).